The following is a 199-amino-acid chain: Desiccation stress protein DSP-22, chloroplastic (199 aa).

Residues 1–52 constitute a chloroplast transit peptide; it reads MASSTCYATIPAMSCRGQSTITRFGPNNLFLGKQSYELPLMRRNAKFTVRSM. The span at 53–62 shows a compositional bias: basic and acidic residues; the sequence is REDNEKEEQQ. The interval 53 to 82 is disordered; that stretch reads REDNEKEEQQQQKQQQTHDGGPDLTPNRTE. Transmembrane regions (helical) follow at residues 130-152 and 172-191; these read FNGG…LIPI and IWNG…TEYV.

The protein belongs to the ELIP/psbS family. As to expression, preferentially localized in the chloroplast-rich palisade parenchyma cells, in extracts of desiccated leaves, in seeds, but not in roots or untreated leaves.

The protein resides in the plastid. The protein localises to the chloroplast thylakoid membrane. Its function is as follows. Possibly exerts a protective role during water loss. The sequence is that of Desiccation stress protein DSP-22, chloroplastic (DSP-22) from Craterostigma plantagineum (Blue gem).